The sequence spans 237 residues: Class B acid phosphatase (237 aa).

Positions methionine 1–alanine 23 are cleaved as a signal peptide. The Nucleophile role is filled by aspartate 69. Positions 69 and 71 each coordinate Mg(2+). Residue aspartate 71 is the Proton donor of the active site. Substrate is bound by residues threonine 137–glycine 138 and lysine 177. Mg(2+) is bound at residue aspartate 192.

It belongs to the class B bacterial acid phosphatase family. In terms of assembly, homotetramer. The cofactor is Mg(2+).

It is found in the periplasm. It catalyses the reaction a phosphate monoester + H2O = an alcohol + phosphate. In terms of biological role, dephosphorylates several organic phosphate monoesters including monophosphate nucleotides (NMPs), coenzyme A (CoA), nicotinamide adenine dinucleotide phosphate (NADP), flavin mononucleotide (FMN) and phosphorylated 5-6 carbon sugars in vitro. Also has a phosphotransferase activity catalyzing the transfer of low-energy phosphate groups from organic phosphate monoesters to free hydroxyl groups of various organic compounds. The chain is Class B acid phosphatase (aphA) from Salmonella typhi.